A 165-amino-acid polypeptide reads, in one-letter code: E3 ubiquitin ligase complex SCF subunit sconC (165 aa).

Positions 106–165 are interaction with the F-box domain of F-box proteins; that stretch reads ILAANYLDIKALLDVGCKTVANMIKGKSPEEIRKTFNIQNDFTPEEEDQIRRENEWAEDR.

It belongs to the SKP1 family. Component of the SCF (SKP1-CUL1-F-box protein) E3 ubiquitin ligase complexes.

Its pathway is protein modification; protein ubiquitination. In terms of biological role, essential component of the SCF (SKP1-CUL1-F-box protein) E3 ubiquitin ligase complexes, which mediate the ubiquitination and subsequent proteasomal degradation of target proteins. Controls sulfur metabolite repression, probably by mediating the inactivation or degradation of the metR transcription factor. This chain is E3 ubiquitin ligase complex SCF subunit sconC (sconC), found in Arthroderma otae (Microsporum canis).